The primary structure comprises 50 residues: MAQKKASLACVECGSRNYSIGVSSTPKPTRLEVNKFCKYCKTYTLHKETR.

The protein belongs to the bacterial ribosomal protein bL33 family.

In Streptococcus pyogenes serotype M1, this protein is Large ribosomal subunit protein bL33B.